Consider the following 698-residue polypeptide: Quillaic acid 3-O-glycosyltransferase CSL1 (698 aa).

The chain crosses the membrane as a helical span at residues 14–34 (ALLSRLHILFHSALVASVFYY). Asn-38 carries N-linked (GlcNAc...) asparagine glycosylation. A helical transmembrane segment spans residues 42 to 62 (GPAWALMTFAELTLAFIWALT). Positions 99 and 100 each coordinate UDP-alpha-D-glucose. The active site involves Asp-129. Asn-317 carries an N-linked (GlcNAc...) asparagine glycan. Ser-436 is a catalytic residue. 6 consecutive transmembrane segments (helical) span residues 478–498 (WTSG…YAMS), 508–528 (YAYF…GVVL), 546–566 (WLLA…YEVL), 581–601 (IWII…MLNK), 636–656 (MFMV…FGGL), and 669–689 (FAQL…MEEI).

Belongs to the glycosyltransferase 2 family. Plant cellulose synthase-like G subfamily. In terms of tissue distribution, mainly expressed in flowers and flower buds and, to a lesser extent, in leaves, stems and roots.

Its subcellular location is the golgi apparatus membrane. It functions in the pathway secondary metabolite biosynthesis; terpenoid biosynthesis. Component of the oleanane-type triterpene saponins (e.g. saponarioside A and saponarioside B) biosynthetic pathway, leading to the production of natural products with detergent properties used as traditional sources of soap. Glycosyltransferase that mediates the conversion of quillaic acid (QA) to QA-mono via the initiation of the C-3 sugar chain. The protein is Quillaic acid 3-O-glycosyltransferase CSL1 of Saponaria officinalis (Common soapwort).